A 118-amino-acid polypeptide reads, in one-letter code: NADH-quinone oxidoreductase subunit A (118 aa).

Transmembrane regions (helical) follow at residues 8–28 (ILIFFLTGFFLSIIILVLNYL), 61–81 (FMYALVFVLFDVETIFLYPWA), and 86–106 (VLGLFAFVEMVIFIGILVLGL).

It belongs to the complex I subunit 3 family. NDH-1 is composed of 14 different subunits. Subunits NuoA, H, J, K, L, M, N constitute the membrane sector of the complex.

The protein resides in the cell membrane. The enzyme catalyses a quinone + NADH + 5 H(+)(in) = a quinol + NAD(+) + 4 H(+)(out). NDH-1 shuttles electrons from NADH, via FMN and iron-sulfur (Fe-S) centers, to quinones in the respiratory chain. The immediate electron acceptor for the enzyme in this species is believed to be a menaquinone. Couples the redox reaction to proton translocation (for every two electrons transferred, four hydrogen ions are translocated across the cytoplasmic membrane), and thus conserves the redox energy in a proton gradient. This chain is NADH-quinone oxidoreductase subunit A, found in Carboxydothermus hydrogenoformans (strain ATCC BAA-161 / DSM 6008 / Z-2901).